The chain runs to 272 residues: Homeobox protein SIX3 (272 aa).

Residues 169–228 constitute a DNA-binding region (homeobox); sequence GEQKTHCFKERTRGLLREWYLQDPYPNPGKKRELAHATGLTPTQVGNWFKNRRQRDRAAA. The tract at residues 244 to 272 is disordered; that stretch reads CTLSGGDSSERADGDTFLSVTDSDSDLDV.

Belongs to the SIX/Sine oculis homeobox family. Interacts with GMNN.

It localises to the nucleus. Its function is as follows. Transcriptional regulator which can act as both a transcriptional repressor and activator by binding a ATTA homeodomain core recognition sequence on these target genes. During forebrain development represses WNT1 expression allowing zona limitans intrathalamica formation and thereby ensuring proper anterio-posterior patterning of the diencephalon and formation of the rostral diencephalon. Acts as a direct upstream activator of SHH expression in the rostral diencephalon ventral midline and that in turn SHH maintains its expression. In addition, Six3 activity is required for the formation of the telencephalon. During postnatal stages of brain development is necessary for ependymal cell maturation by promoting the maturation of radial glia into ependymal cells through regulation of neuroblast proliferation and migration. Acts on the proliferation and differentiation of neural progenitor cells through activating transcription of CCND1 and CCND2. During early lens formation plays a role in lens induction and specification by activating directly PAX6 in the presumptive lens ectoderm. In turn PAX6 activates SIX3 resulting in activation of PDGFRA and CCND1 promoting cell proliferation. Also is required for the neuroretina development by directly suppressing WNT8B expression in the anterior neural plate territory. Its action during retina development and lens morphogenesis is AES and TLE4-dependent manner. Furthermore, during eye development regulates several genes expression. Before and during early lens development represses the CRYGF promoter by binding a SIX repressor element. Directly activates RHO transcription, or cooperates with CRX or NRL. Six3 also functions in the formation of the proximodistal axis of the optic cup, and promotes the formation of optic vesicles-like structures. During pituitary development, acts in parallel or alternatively with HESX1 to control cell proliferation through Wnt/beta-catenin pathway. Plays a role in eye development by suppressing WNT1 expression and in dorsal-ventral patterning by repressing BMP signaling pathway. The polypeptide is Homeobox protein SIX3 (six3) (Oryzias latipes (Japanese rice fish)).